The primary structure comprises 481 residues: Zinc metalloproteinase/disintegrin (481 aa).

The N-terminal stretch at 1–20 (MIQVLLVTICLAVFPYQGSS) is a signal peptide. The propeptide occupies 21-190 (IILESGNVDD…KASQLYLTPE (170 aa)). In terms of domain architecture, Peptidase M12B spans 197 to 392 (RYIKLAIVVD…DNPQCILNAP (196 aa)). Disulfide bonds link Cys308–Cys387, Cys349–Cys371, and Cys351–Cys354. His333 is a binding site for Zn(2+). Glu334 is a catalytic residue. Positions 337 and 343 each coordinate Zn(2+). Positions 393 to 408 (LRTDTVSTPVSGNEFL) are excised as a propeptide. Residues 400-481 (TPVSGNEFLE…ADCPRNGLYS (82 aa)) enclose the Disintegrin domain. Disulfide bonds link Cys414/Cys429, Cys416/Cys424, Cys423/Cys446, Cys437/Cys443, Cys442/Cys467, and Cys455/Cys474. The Cell attachment site signature appears at 459-461 (RGD).

It belongs to the venom metalloproteinase (M12B) family. P-II subfamily. P-IIa sub-subfamily. As to quaternary structure, monomer. It depends on Zn(2+) as a cofactor. As to expression, expressed by the venom gland.

The protein resides in the secreted. Its function is as follows. Impairs hemostasis in the envenomed animal. In terms of biological role, inhibits platelet aggregation induced by ADP, thrombin, platelet-activating factor and collagen. Acts by inhibiting fibrinogen interaction with platelet receptors GPIIb/GPIIIa (ITGA2B/ITGB3). The chain is Zinc metalloproteinase/disintegrin from Protobothrops elegans (Elegant pitviper).